A 447-amino-acid polypeptide reads, in one-letter code: UDP-N-acetylmuramoylalanine--D-glutamate ligase (447 aa).

112 to 118 contacts ATP; that stretch reads GTNGKST.

Belongs to the MurCDEF family.

The protein localises to the cytoplasm. It carries out the reaction UDP-N-acetyl-alpha-D-muramoyl-L-alanine + D-glutamate + ATP = UDP-N-acetyl-alpha-D-muramoyl-L-alanyl-D-glutamate + ADP + phosphate + H(+). It functions in the pathway cell wall biogenesis; peptidoglycan biosynthesis. Functionally, cell wall formation. Catalyzes the addition of glutamate to the nucleotide precursor UDP-N-acetylmuramoyl-L-alanine (UMA). The protein is UDP-N-acetylmuramoylalanine--D-glutamate ligase of Legionella pneumophila subsp. pneumophila (strain Philadelphia 1 / ATCC 33152 / DSM 7513).